A 167-amino-acid chain; its full sequence is UPF0225 protein VP1145 (167 aa).

Belongs to the UPF0225 family.

In Vibrio parahaemolyticus serotype O3:K6 (strain RIMD 2210633), this protein is UPF0225 protein VP1145.